Reading from the N-terminus, the 1101-residue chain is MDMDMDTSPSYFDPEALSVRDQFRRYRKRHSTSPHEEMLSSNVSENRLLYDGHNIHSPTNTALLLENIKEEVDNFHTDHYEGTPTNPISASRRESVGILNDDDEALFRRVESQSLKACKIENDELAESGDTTFALFASLFDSALQGLMSIPNLMLRLEESCRNVSQSIRYGSDIRHRAVEDKLMRQKAQLLLGEAASWSLLWNLYGKGTDEVPENLILIPSTSHLEACQFVLNDHTAQLCLRIVMWLEELASKSLDLERKVQGSHVGTYLPNAGVWHHTQRYLKKNGSNADTLHHLDFDAPTREHARLLPDDYKQDESVLEDVWTLIRAGRIEEACDLCRSAGQSWRAATLCPFSGMDMFPSIEALVKNGENRTLQAIEQESGFGNQLRLWKWASYCASEKIAEQDGGKHEVAVFATQCSNLNRMLPICTDWESACWAMAKSWLDVQVDLELAQSKPGLTERFKSCIDESPEATQNGCQASFGPEDWPLHVLNQQPRDLPALLQKLHSGEMVHEAVVRGCKEQHRQIQMNLMLGDISHLLDIIWSWIAPLEDDQSNFRPHGDPHMIKFGAHMVLVLRLLFTDEINDSFKEKLNNVGDLILHMYAMFLFSKQHEELVGIYASQLARHRCIELFVHMMELRMHSSVHVKYKIFLSAMEYLSFSPVDDLHGNFEEIVDRVLSRSREIKLAKYDPSIDVAEQHRQQSLQKAIAIQWLCFTPPSTIKDVKDVTSKLLLRSLMHSNILFREFALIAMWRVPATPVGAHTLLSYLAEPLKQLSENPDTLEDYVSENLQEFQDWNEYYSCDAKYRNWLKFQLENAEVTELSEEENQKAVVAAKETLDSSLSLLLRQDNPWMTFLEDHVFESEEYLFLELHATAMLCLPSGECLRPDATVCAALMSALYSSVSEEVVLDRQLMVNVSISSRDSYCIEVVLRCLAIKGDGLGPHNANDGGILSAVAAAGFKGSDIYGTYFSFTYDLPPFSIEIWGCELTRFQAGVTMDISRLDAWYSSKEGSLETPATYIVRGLCRRCCLPELVLRSMQVSVSLMESGNPPEDHDELIELVASDETGFLSLFSRQQLQEFMLFEREYRMSQLELQEELSSP.

Belongs to the nucleoporin Nup84/Nup107 family. As to quaternary structure, part of the nuclear pore complex (NPC). The NPC has an eight-fold symmetrical structure comprising a central transport channel and two rings, the cytoplasmic and nuclear rings, to which eight filaments are attached. The cytoplasmic filaments have loose ends, while the nuclear filaments are joined in a distal ring, forming a nuclear basket. NPCs are highly dynamic in configuration and composition, and can be devided in 3 subcomplexes, the NUP62 subcomplex, the NUP107-160 subcomplex and the NUP93 subcomplex, containing approximately 30 different nucleoporin proteins.

The protein resides in the nucleus envelope. Its subcellular location is the nucleus. It localises to the nuclear pore complex. The chain is Nuclear pore complex protein NUP107 from Arabidopsis thaliana (Mouse-ear cress).